The sequence spans 229 residues: Urease accessory protein UreF (229 aa).

This sequence belongs to the UreF family. In terms of assembly, ureD, UreF and UreG form a complex that acts as a GTP-hydrolysis-dependent molecular chaperone, activating the urease apoprotein by helping to assemble the nickel containing metallocenter of UreC. The UreE protein probably delivers the nickel.

It localises to the cytoplasm. Functionally, required for maturation of urease via the functional incorporation of the urease nickel metallocenter. This chain is Urease accessory protein UreF, found in Staphylococcus aureus (strain JH1).